A 317-amino-acid chain; its full sequence is Melanocyte-stimulating hormone receptor (317 aa).

Topologically, residues 1-37 (MSVQGPQRRLLGSLNSTSPAAPRLGLAANQTGPRCLE) are extracellular. 2 N-linked (GlcNAc...) asparagine glycosylation sites follow: Asn15 and Asn29. A helical membrane pass occupies residues 38–63 (VSVPDGLFLSLGLVSVVENVLVVAAI). The Cytoplasmic segment spans residues 64 to 72 (AKNRNLHSP). The helical transmembrane segment at 73–93 (MYYFICCLAVSDLLVSVSSVL) threads the bilayer. The Extracellular segment spans residues 94-118 (ETAVMLLLEAGTLAGRAAVVQQLDD). The chain crosses the membrane as a helical span at residues 119-140 (VIDVLVCGAMVSSLCFLGAIAV). Residues 141-163 (DRYISIFYALRYHSIVTLPRAWR) are Cytoplasmic-facing. A helical transmembrane segment spans residues 164 to 183 (AISAIWVASVLSSTLFIAYY). The Extracellular segment spans residues 184-191 (DHTAVLLC). Residues 192-211 (LVSFFVAMLVLMAVLYVHML) traverse the membrane as a helical segment. At 212–240 (ARACQHARGIARLHKRQRPVHQGLGLKGA) the chain is on the cytoplasmic side. The helical transmembrane segment at 241 to 266 (ATLTILLGIFFLCWGPFFLHLSLMVL) threads the bilayer. The Extracellular segment spans residues 267–279 (CPRHPICGCVFKN). Residues 280–300 (FNLFLTLIICNSIVDPLIYAF) traverse the membrane as a helical segment. Topologically, residues 301-317 (RSQELRKTLQEVLLCSW) are cytoplasmic. Cys315 is lipidated: S-palmitoyl cysteine.

This sequence belongs to the G-protein coupled receptor 1 family. In terms of assembly, interacts with MGRN1, but does not undergo MGRN1-mediated ubiquitination; this interaction competes with GNAS-binding and thus inhibits agonist-induced cAMP production. Interacts with OPN3; the interaction results in a decrease in MC1R-mediated cAMP signaling and ultimately a decrease in melanin production in melanocytes.

The protein resides in the cell membrane. In terms of biological role, receptor for MSH (alpha, beta and gamma) and ACTH. The activity of this receptor is mediated by G proteins which activate adenylate cyclase. Mediates melanogenesis, the production of eumelanin (black/brown) and phaeomelanin (red/yellow), via regulation of cAMP signaling in melanocytes. The sequence is that of Melanocyte-stimulating hormone receptor (MC1R) from Panthera onca (Jaguar).